Reading from the N-terminus, the 262-residue chain is (5R,7aS)-5-hydroxy-7a-methyl-1-oxo-2,3,5,6,7,7a-hexahydro-1H-indene-carboxyl-CoA reductase (262 aa).

NAD(+)-binding residues include D50, D77, V78, N104, Y170, K174, and A203. Catalysis depends on Y170, which acts as the Proton acceptor.

The protein belongs to the short-chain dehydrogenases/reductases (SDR) family.

The enzyme catalyses (5R,7aS)-5-hydroxy-7a-methyl-1-oxo-2,3,5,6,7,7a-hexahydro-1H-indene-carboxyl-CoA + NAD(+) = (7aS)-7a-methyl-1,5-dioxo-2,3,5,6,7,7a-hexahydro-1H-indene-carboxyl-CoA + NADH + H(+). It functions in the pathway steroid metabolism; cholesterol degradation. Its activity is regulated as follows. Requires the presence of IpdC. Its function is as follows. Involved in the final steps of cholesterol and steroid degradation. Probably catalyzes the oxidation of the 5-OH group of (5R,7aS)-5-hydroxy-7a-methyl-1-oxo-2,3,5,6,7,7a-hexahydro-1H-indene-carboxyl-CoA, leading to the formation of HIEC-CoA. The sequence is that of (5R,7aS)-5-hydroxy-7a-methyl-1-oxo-2,3,5,6,7,7a-hexahydro-1H-indene-carboxyl-CoA reductase from Mycobacterium tuberculosis (strain ATCC 25618 / H37Rv).